Here is a 112-residue protein sequence, read N- to C-terminus: Putative pterin-4-alpha-carbinolamine dehydratase (112 aa).

The protein belongs to the pterin-4-alpha-carbinolamine dehydratase family.

The catalysed reaction is (4aS,6R)-4a-hydroxy-L-erythro-5,6,7,8-tetrahydrobiopterin = (6R)-L-erythro-6,7-dihydrobiopterin + H2O. The polypeptide is Putative pterin-4-alpha-carbinolamine dehydratase (Shewanella piezotolerans (strain WP3 / JCM 13877)).